The following is a 211-amino-acid chain: Arginine exporter protein ArgO (211 aa).

6 consecutive transmembrane segments (helical) span residues 1–21 (MISYYFQGFALGAAMILPLGP), 37–57 (LMIALLCALSDLVLISAGIFG), 68–88 (LLALVTWGGVAFLLWYGLGAL), 111–131 (IIATMLAVTWLNPHVYLDTFV), 147–167 (WFALGTISASFLWFFGLALLA), and 179–199 (AQRIINILVGVVMWLIAFQLA).

The protein belongs to the LysE/ArgO transporter (TC 2.A.75) family.

The protein localises to the cell inner membrane. The enzyme catalyses L-arginine(in) = L-arginine(out). Its function is as follows. Involved in the export of arginine. Important to control the intracellular level of arginine and the correct balance between arginine and lysine. This chain is Arginine exporter protein ArgO, found in Salmonella enteritidis PT4 (strain P125109).